Reading from the N-terminus, the 214-residue chain is Probable DNA (cytosine-5)-methyltransferase (214 aa).

Residue Cys-62 is part of the active site.

The protein belongs to the class I-like SAM-binding methyltransferase superfamily. C5-methyltransferase family. In terms of assembly, probably requires another subunit for function.

It catalyses the reaction a 2'-deoxycytidine in DNA + S-adenosyl-L-methionine = a 5-methyl-2'-deoxycytidine in DNA + S-adenosyl-L-homocysteine + H(+). Its function is as follows. This is probably the methylase that recognizes and modifies 5'-CpG-3'. The chain is Probable DNA (cytosine-5)-methyltransferase from Dryophytes versicolor (chameleon treefrog).